A 72-amino-acid chain; its full sequence is Large ribosomal subunit protein uL29 (72 aa).

This sequence belongs to the universal ribosomal protein uL29 family.

The chain is Large ribosomal subunit protein uL29 from Prochlorococcus marinus (strain MIT 9301).